The primary structure comprises 566 residues: Cytoplasmic polyadenylation element-binding protein 2 (566 aa).

Disordered regions lie at residues 17-46 (FWGNGDQLEGKTLSSIKQQESKKMDDSVEG) and 64-98 (LERLHEKEEQECEEERLDWSEKVDSEEEEEDIQEQ). The span at 87 to 98 (DSEEEEEDIQEQ) shows a compositional bias: acidic residues. The RRM domain occupies 430–512 (MVAFIGGVPR…KRVEIKPYFF (83 aa)).

Its function is as follows. Cytoplasmic polyadenylation element binding protein that binds to and regulates the translation of specific mRNAs. The polypeptide is Cytoplasmic polyadenylation element-binding protein 2 (cpb-2) (Caenorhabditis briggsae).